The following is a 333-amino-acid chain: Glycerol-3-phosphate dehydrogenase [NAD(P)+] (333 aa).

NADPH is bound by residues Ser-13, Tyr-14, Arg-34, and Lys-108. Sn-glycerol 3-phosphate-binding residues include Lys-108, Gly-137, and Thr-139. Residue Ala-141 coordinates NADPH. Sn-glycerol 3-phosphate contacts are provided by Lys-193, Asp-246, Ser-256, Arg-257, and Asn-258. The active-site Proton acceptor is Lys-193. Arg-257 contacts NADPH. Glu-283 contributes to the NADPH binding site.

Belongs to the NAD-dependent glycerol-3-phosphate dehydrogenase family.

The protein resides in the cytoplasm. The enzyme catalyses sn-glycerol 3-phosphate + NAD(+) = dihydroxyacetone phosphate + NADH + H(+). The catalysed reaction is sn-glycerol 3-phosphate + NADP(+) = dihydroxyacetone phosphate + NADPH + H(+). The protein operates within membrane lipid metabolism; glycerophospholipid metabolism. Functionally, catalyzes the reduction of the glycolytic intermediate dihydroxyacetone phosphate (DHAP) to sn-glycerol 3-phosphate (G3P), the key precursor for phospholipid synthesis. This chain is Glycerol-3-phosphate dehydrogenase [NAD(P)+], found in Idiomarina loihiensis (strain ATCC BAA-735 / DSM 15497 / L2-TR).